We begin with the raw amino-acid sequence, 274 residues long: tRNA-cytidine(32) 2-sulfurtransferase (274 aa).

The short motif at Ser40–Ser45 is the PP-loop motif element. [4Fe-4S] cluster is bound by residues Cys115, Cys118, and Cys206.

The protein belongs to the TtcA family. Homodimer. The cofactor is Mg(2+). Requires [4Fe-4S] cluster as cofactor.

It localises to the cytoplasm. The catalysed reaction is cytidine(32) in tRNA + S-sulfanyl-L-cysteinyl-[cysteine desulfurase] + AH2 + ATP = 2-thiocytidine(32) in tRNA + L-cysteinyl-[cysteine desulfurase] + A + AMP + diphosphate + H(+). It participates in tRNA modification. Functionally, catalyzes the ATP-dependent 2-thiolation of cytidine in position 32 of tRNA, to form 2-thiocytidine (s(2)C32). The sulfur atoms are provided by the cysteine/cysteine desulfurase (IscS) system. The chain is tRNA-cytidine(32) 2-sulfurtransferase from Pseudomonas syringae pv. syringae (strain B728a).